The sequence spans 155 residues: UPF0178 protein mlr0875 (155 aa).

Belongs to the UPF0178 family.

The polypeptide is UPF0178 protein mlr0875 (Mesorhizobium japonicum (strain LMG 29417 / CECT 9101 / MAFF 303099) (Mesorhizobium loti (strain MAFF 303099))).